The following is a 662-amino-acid chain: Tubulin--tyrosine ligase-like protein 12 (662 aa).

The region spanning 324-660 (LKKRKIKVYA…LDEIDPTKVT (337 aa)) is the TTL domain. ATP-binding positions include 472–475 (CEYI), Lys491, and Asp493.

It belongs to the tubulin--tyrosine ligase family.

Functionally, regulates microtubule dynamics in uterine muscle cells. The sequence is that of Tubulin--tyrosine ligase-like protein 12 from Caenorhabditis elegans.